Consider the following 523-residue polypeptide: 2-isopropylmalate synthase (523 aa).

Positions 5–267 constitute a Pyruvate carboxyltransferase domain; it reads VIIFDTTLRD…HTAINHQEIW (263 aa). Asp-14, His-202, His-204, and Asn-238 together coordinate Mn(2+). Positions 392–523 are regulatory domain; sequence RLDYFSVQSG…QHNENNKETV (132 aa).

This sequence belongs to the alpha-IPM synthase/homocitrate synthase family. LeuA type 1 subfamily. Homodimer. Requires Mn(2+) as cofactor.

The protein localises to the cytoplasm. The enzyme catalyses 3-methyl-2-oxobutanoate + acetyl-CoA + H2O = (2S)-2-isopropylmalate + CoA + H(+). The protein operates within amino-acid biosynthesis; L-leucine biosynthesis; L-leucine from 3-methyl-2-oxobutanoate: step 1/4. In terms of biological role, catalyzes the condensation of the acetyl group of acetyl-CoA with 3-methyl-2-oxobutanoate (2-ketoisovalerate) to form 3-carboxy-3-hydroxy-4-methylpentanoate (2-isopropylmalate). The chain is 2-isopropylmalate synthase from Escherichia coli O157:H7.